A 997-amino-acid chain; its full sequence is Protein Smaug (997 aa).

Residues methionine 1–threonine 37 show a composition bias toward polar residues. Disordered stretches follow at residues methionine 1 to proline 69 and leucine 329 to serine 370. Composition is skewed to low complexity over residues threonine 44–proline 69 and leucine 329–serine 338. Residues serine 564 and serine 575 each carry the phosphoserine modification. Positions glutamate 583–methionine 763 are interaction with cup. Positions glycine 600–lysine 654 constitute an SAM domain. Disordered regions lie at residues histidine 773–methionine 892 and glycine 944–glutamate 972. 2 stretches are compositionally biased toward polar residues: residues asparagine 802–leucine 822 and histidine 854–proline 864. Serine 970 is subject to Phosphoserine.

The protein belongs to the SMAUG family. As to quaternary structure, interacts with oskar (osk). Binds to the 3'-UTR of nos. Interacts with cup, which in turn recruits eIF4-E, leading to an indirect interaction between smg and eIF4-E that prevents mRNA translation.

It localises to the cytoplasm. Functionally, translation regulator that binds to the 3'-UTR of specific mRNAs such as nanos (nos) and prevent their translation. Prevents translation of unlocalized nos in the bulk cytoplasm via the recruitment of cup. This is Protein Smaug from Drosophila erecta (Fruit fly).